A 430-amino-acid chain; its full sequence is Probable dual-specificity RNA methyltransferase RlmN (430 aa).

The active-site Proton acceptor is the E125. In terms of domain architecture, Radical SAM core spans 152-395 (RHGRVTLCVS…VTVRDTRGRE (244 aa)). A disulfide bridge connects residues C159 and C400. [4Fe-4S] cluster is bound by residues C166, C170, and C173. S-adenosyl-L-methionine contacts are provided by residues 221–222 (GE), S255, 278–280 (SLH), and N357. C400 acts as the S-methylcysteine intermediate in catalysis.

Belongs to the radical SAM superfamily. RlmN family. It depends on [4Fe-4S] cluster as a cofactor.

It is found in the cytoplasm. The catalysed reaction is adenosine(2503) in 23S rRNA + 2 reduced [2Fe-2S]-[ferredoxin] + 2 S-adenosyl-L-methionine = 2-methyladenosine(2503) in 23S rRNA + 5'-deoxyadenosine + L-methionine + 2 oxidized [2Fe-2S]-[ferredoxin] + S-adenosyl-L-homocysteine. It carries out the reaction adenosine(37) in tRNA + 2 reduced [2Fe-2S]-[ferredoxin] + 2 S-adenosyl-L-methionine = 2-methyladenosine(37) in tRNA + 5'-deoxyadenosine + L-methionine + 2 oxidized [2Fe-2S]-[ferredoxin] + S-adenosyl-L-homocysteine. Its function is as follows. Specifically methylates position 2 of adenine 2503 in 23S rRNA and position 2 of adenine 37 in tRNAs. This Acidothermus cellulolyticus (strain ATCC 43068 / DSM 8971 / 11B) protein is Probable dual-specificity RNA methyltransferase RlmN.